Consider the following 354-residue polypeptide: Protein RecA (354 aa).

75 to 82 serves as a coordination point for ATP; sequence GPESSGKT.

This sequence belongs to the RecA family.

The protein resides in the cytoplasm. Its function is as follows. Can catalyze the hydrolysis of ATP in the presence of single-stranded DNA, the ATP-dependent uptake of single-stranded DNA by duplex DNA, and the ATP-dependent hybridization of homologous single-stranded DNAs. It interacts with LexA causing its activation and leading to its autocatalytic cleavage. The chain is Protein RecA from Cupriavidus taiwanensis (strain DSM 17343 / BCRC 17206 / CCUG 44338 / CIP 107171 / LMG 19424 / R1) (Ralstonia taiwanensis (strain LMG 19424)).